A 163-amino-acid polypeptide reads, in one-letter code: NADH-quinone oxidoreductase subunit I (163 aa).

2 consecutive 4Fe-4S ferredoxin-type domains span residues 54–84 and 94–123; these read LRRY…IDSA and TRYD…ETHI. The [4Fe-4S] cluster site is built by C64, C67, C70, C74, C103, C106, C109, and C113.

The protein belongs to the complex I 23 kDa subunit family. As to quaternary structure, NDH-1 is composed of 14 different subunits. Subunits NuoA, H, J, K, L, M, N constitute the membrane sector of the complex. The cofactor is [4Fe-4S] cluster.

The protein resides in the cell inner membrane. The enzyme catalyses a quinone + NADH + 5 H(+)(in) = a quinol + NAD(+) + 4 H(+)(out). Its function is as follows. NDH-1 shuttles electrons from NADH, via FMN and iron-sulfur (Fe-S) centers, to quinones in the respiratory chain. The immediate electron acceptor for the enzyme in this species is believed to be ubiquinone. Couples the redox reaction to proton translocation (for every two electrons transferred, four hydrogen ions are translocated across the cytoplasmic membrane), and thus conserves the redox energy in a proton gradient. The protein is NADH-quinone oxidoreductase subunit I of Xanthomonas oryzae pv. oryzae (strain KACC10331 / KXO85).